The following is a 45-amino-acid chain: Large ribosomal subunit protein bL36 (45 aa).

A disordered region spans residues 26-45 (VINKKDPNRKQRQKGPARKK). The span at 35–45 (KQRQKGPARKK) shows a compositional bias: basic residues.

The protein belongs to the bacterial ribosomal protein bL36 family.

This is Large ribosomal subunit protein bL36 from Protochlamydia amoebophila (strain UWE25).